Consider the following 445-residue polypeptide: Phosphoglucosamine mutase (445 aa).

Ser102 (phosphoserine intermediate) is an active-site residue. Positions 102, 241, 243, and 245 each coordinate Mg(2+). Ser102 is modified (phosphoserine).

It belongs to the phosphohexose mutase family. Requires Mg(2+) as cofactor. In terms of processing, activated by phosphorylation.

The catalysed reaction is alpha-D-glucosamine 1-phosphate = D-glucosamine 6-phosphate. Catalyzes the conversion of glucosamine-6-phosphate to glucosamine-1-phosphate. This Shigella boydii serotype 4 (strain Sb227) protein is Phosphoglucosamine mutase.